The primary structure comprises 59 residues: Potassium channel toxin alpha-KTx 4.5 (59 aa).

Residues 1–22 form the signal peptide; sequence MKAFYGVLIIFILISMLDLSQQ. 3 disulfides stabilise this stretch: Cys-29/Cys-50, Cys-35/Cys-55, and Cys-39/Cys-57. The interaction with Ca(2+)-activated K(+) channels stretch occupies residues 48–55; sequence GKCMNGKC.

As to expression, expressed by the venom gland.

The protein resides in the secreted. Its function is as follows. Inhibits with low potency Kv1.1/KCNA1, Kv1.2/KCNA2, Kv1.3/KCNA3 and Kv11.1/KCNH2/ERG1 voltage-gated potassium channels. This chain is Potassium channel toxin alpha-KTx 4.5, found in Tityus costatus (Brazilian scorpion).